A 430-amino-acid chain; its full sequence is MAPSPEGVTVVLGAQWGDEGKGKLVDILAAEADICARCAGGNNAGHTIVVRNDKGEKTSYAFNLLPSGLINPECTAFIGSGVVVHVPSLFNELDTLERKGLKVAGRLFVSDRAHLVMGFHQIVDGLKEVELGGSSIGTTRKGIGPAYSSKASRSGLRVHHLFDPTFPAKFRKLVEGRFKRYGHFEFDTEGEIEMYLAFAERLRPFIVDGPTFMHNAVNSGKRVLVEGANALMLDLDYGTYPFVTSSSTSIGGVVSGLGISPFAIKRVVGVIKAYTTRVGGGPFPTEDLATVGETLQEVGAEYGTVTGRRRRCGWLDLVVMKYSTMINGYTSLNLTKLDVLDGFDEIKVATGYKIDGVEVEGFPADLDRLAKVEVQYATLPGWKTDISNCKTYQEFPENAKAYIKFIEDYLGVKVQYVGVGPGRDQNVIIF.

Residues 17–23 (GDEGKGK) and 45–47 (GHT) each bind GTP. The active-site Proton acceptor is Asp18. Asp18 and Gly45 together coordinate Mg(2+). IMP contacts are provided by residues 18 to 21 (DEGK), 43 to 46 (NAGH), Thr139, Arg153, Asn229, Thr244, and Arg308. The active-site Proton donor is the His46. 304–310 (TVTGRRR) is a binding site for substrate. Residues Arg310, 336–338 (KLD), and 418–420 (GVG) each bind GTP.

Belongs to the adenylosuccinate synthetase family. In terms of assembly, homodimer. Mg(2+) is required as a cofactor.

It is found in the cytoplasm. It catalyses the reaction IMP + L-aspartate + GTP = N(6)-(1,2-dicarboxyethyl)-AMP + GDP + phosphate + 2 H(+). Its pathway is purine metabolism; AMP biosynthesis via de novo pathway; AMP from IMP: step 1/2. Plays an important role in the de novo pathway and in the salvage pathway of purine nucleotide biosynthesis. Catalyzes the first committed step in the biosynthesis of AMP from IMP. This chain is Adenylosuccinate synthetase, found in Cryptococcus neoformans var. neoformans serotype D (strain B-3501A) (Filobasidiella neoformans).